The sequence spans 500 residues: Na(+)/H(+) antiporter NhaB (500 aa).

Helical transmembrane passes span 28-50 (FLLLNPLLLWLAGPVTSAWVLVG), 68-88 (GGLLVLEALLLGLATPEALYA), 98-118 (LLLMFMVAGIYFMKDLLLLLF), 121-141 (LLLGVRSKTLLSLLFCLLAAL), 145-165 (FLDALTVTAVVISVAVAFFAV), 205-225 (LLMHAAVGTALGGVCTLVGEP), 244-264 (QVAPVSMPVLAAGLLTCVLLE), 311-331 (VLIVGLALHVAEVGLIGLLVI), 350-370 (FQEALPFTALLVVFFAVVAVI), 394-414 (MLFIANGLLSAISDNVFVATI), 449-469 (VATPNGQAAFLFLLTSSIAPL), and 477-497 (MVWMALPYTLVMGGLGWWAVS).

The protein belongs to the NhaB Na(+)/H(+) (TC 2.A.34) antiporter family.

The protein localises to the cell inner membrane. The enzyme catalyses 2 Na(+)(in) + 3 H(+)(out) = 2 Na(+)(out) + 3 H(+)(in). Its function is as follows. Na(+)/H(+) antiporter that extrudes sodium in exchange for external protons. This Pseudomonas aeruginosa (strain LESB58) protein is Na(+)/H(+) antiporter NhaB.